Here is a 311-residue protein sequence, read N- to C-terminus: Glycerol-3-phosphate dehydrogenase [NAD(P)+] (311 aa).

NADPH contacts are provided by Trp11, Arg30, Arg31, and Lys95. 3 residues coordinate sn-glycerol 3-phosphate: Lys95, Gly123, and Ser125. NADPH is bound at residue Ala127. The sn-glycerol 3-phosphate site is built by Lys177, Asp230, Ser240, Arg241, and Asn242. Lys177 acts as the Proton acceptor in catalysis. NADPH is bound at residue Arg241. Positions 265 and 267 each coordinate NADPH.

Belongs to the NAD-dependent glycerol-3-phosphate dehydrogenase family.

The protein resides in the cytoplasm. The catalysed reaction is sn-glycerol 3-phosphate + NAD(+) = dihydroxyacetone phosphate + NADH + H(+). It carries out the reaction sn-glycerol 3-phosphate + NADP(+) = dihydroxyacetone phosphate + NADPH + H(+). Its pathway is membrane lipid metabolism; glycerophospholipid metabolism. In terms of biological role, catalyzes the reduction of the glycolytic intermediate dihydroxyacetone phosphate (DHAP) to sn-glycerol 3-phosphate (G3P), the key precursor for phospholipid synthesis. The chain is Glycerol-3-phosphate dehydrogenase [NAD(P)+] from Bartonella bacilliformis (strain ATCC 35685 / KC583 / Herrer 020/F12,63).